Here is a 133-residue protein sequence, read N- to C-terminus: Global transcriptional regulator Spx (133 aa).

A disulfide bridge connects residues Cys10 and Cys13.

It belongs to the ArsC family. Spx subfamily. In terms of assembly, interacts with the C-terminal domain of the alpha subunit of the RNAP.

The protein resides in the cytoplasm. In terms of biological role, global transcriptional regulator that plays a key role in stress response and exerts either positive or negative regulation of genes. Acts by interacting with the C-terminal domain of the alpha subunit of the RNA polymerase (RNAP). This interaction can enhance binding of RNAP to the promoter region of target genes and stimulate their transcription, or block interaction of RNAP with activator. In Streptococcus pneumoniae serotype 4 (strain ATCC BAA-334 / TIGR4), this protein is Global transcriptional regulator Spx.